The chain runs to 370 residues: MAASTMSVCSSDLSYGSRVCLPGSCDSCSDSWQVDDCPESCCEPPCCAPAPCLSLVCTPVSYVSSPCCRVTCEPSPCQSGCTSSCTPSCCQQSSCQLACCASSPCQQACCVPVCCKTVCCKPVYCVPVCSGDSSCCQQSSCQSACCTSSPCQQACCVPICCKPVCSGISSSCCQQSSCVSCVSSPCCQAVCEPSPCQSGCISSCTPSCCQQSSCKPACCTSSPCQQACCVPVCCKPVCCVPTCSDDSGSCCQPACCTSSQSQQGCCVPVCCKPVCCVPVCSGASTSCCQQSSCQPACCTTSCCRPSSSVSLLCRPVCRPACCVPVPSCCAPTSSCQASCCRPASCVSLLCRPACSRPACCGPTSTQKSSC.

The tract at residues 36-363 (DCPESCCEPP…CSRPACCGPT (328 aa)) is 30 X 5 AA repeats of C-C-X(3). A run of 30 repeats spans residues 41–45 (CCEPP), 46–50 (CCAPA), 67–71 (CCRVT), 89–93 (CCQQS), 99–103 (CCASS), 109–113 (CCVPV), 114–118 (CCKTV), 119–123 (CCKPV), 135–139 (CCQQS), 145–149 (CCTSS), 155–159 (CCVPI), 160–164 (CCKPV), 172–176 (CCQQS), 186–190 (CCQAV), 208–212 (CCQQS), 218–222 (CCTSS), 228–232 (CCVPV), 233–237 (CCKPV), 238–242 (CCVPT), 250–254 (CCQPA), 255–259 (CCTSS), 265–269 (CCVPV), 270–274 (CCKPV), 275–279 (CCVPV), 287–291 (CCQQS), 297–301 (CCTTS), 302–306 (CCRPS), 321–325 (CCVPV), 339–343 (CCRPA), and 359–363 (CCGPT).

The protein belongs to the KRTAP type 10 family. In terms of assembly, interacts with hair keratins. In terms of tissue distribution, restricted to a narrow region of the hair fiber cuticle, lying approximately 20 cell layers above the apex of the dermal papilla of the hair root; not detected in any other tissues.

Its function is as follows. In the hair cortex, hair keratin intermediate filaments are embedded in an interfilamentous matrix, consisting of hair keratin-associated proteins (KRTAP), which are essential for the formation of a rigid and resistant hair shaft through their extensive disulfide bond cross-linking with abundant cysteine residues of hair keratins. The matrix proteins include the high-sulfur and high-glycine-tyrosine keratins. The protein is Keratin-associated protein 10-7 (KRTAP10-7) of Homo sapiens (Human).